Reading from the N-terminus, the 729-residue chain is Putative cyclic nucleotide-gated ion channel 19 (729 aa).

The Cytoplasmic segment spans residues 1-172; sequence MAHTRTFTSR…SKFVQVWTRV (172 aa). Positions 52-82 are disordered; it reads SGPIHSTRRTEPLFSPSPQESPDSSSTVDVP. A compositionally biased stretch (low complexity) spans 67–81; the sequence is PSPQESPDSSSTVDV. The chain crosses the membrane as a helical span at residues 173–193; the sequence is LAFSSLVAIFIDPLFFFLLLI. Topologically, residues 194–208 are extracellular; sequence QQDNKCIAIDWRATK. A helical membrane pass occupies residues 209-229; it reads VLVSLRSITDLIFFINILLQF. Residues 230-261 are Cytoplasmic-facing; that stretch reads RLAYVAPESRIVGAGQLVDHPRKIARHYFRGK. Residues 262 to 282 form a helical membrane-spanning segment; that stretch reads FLLDMFIVFPIPQIMILRIIP. Residues 283-295 are Extracellular-facing; sequence LHLGTRREESEKQ. The chain crosses the membrane as a helical span at residues 296-316; it reads ILRATVLFQYIPKLYRLLPLL. Residues 317 to 332 lie on the Cytoplasmic side of the membrane; that stretch reads AGQTSTGFIFESAWAN. A helical membrane pass occupies residues 333–353; sequence FVINLLTFMLAGHAVGSCWYL. The Extracellular segment spans residues 354–451; the sequence is SALQRVKKCM…STLAGNLSPS (98 aa). The helical transmembrane segment at 452 to 472 threads the bilayer; it reads YSVGEVFFTMGIIGLGLLLFA. The Cytoplasmic segment spans residues 473–729; that stretch reads RLIGNMHNFL…LNTAHSNSNR (257 aa). Residues 560 to 677 and Glu-625 each bind a nucleoside 3',5'-cyclic phosphate; that span reads IFSL…VTSL. The calmodulin-binding stretch occupies residues 678-694; the sequence is FSRFLRSHRVQGAIRYE. The IQ domain occupies 699–728; that stretch reads RLRAAMQIQVAWRYRKRQLQRLNTAHSNSN.

This sequence belongs to the cyclic nucleotide-gated cation channel (TC 1.A.1.5) family. As to quaternary structure, homotetramer or heterotetramer.

The protein resides in the cell membrane. In terms of biological role, putative cyclic nucleotide-gated ion channel. This Arabidopsis thaliana (Mouse-ear cress) protein is Putative cyclic nucleotide-gated ion channel 19 (CNGC19).